Here is a 554-residue protein sequence, read N- to C-terminus: U4/U6 small nuclear ribonucleoprotein PRP4-like protein (554 aa).

A compositionally biased stretch (pro residues) spans 48-65 (APIPMMPHPPVARPPTFR). Residues 48–99 (APIPMMPHPPVARPPTFRPPVSQNGGVKTSDSDSESDDEHIEISEESKQVRE) are disordered. Over residues 88–99 (IEISEESKQVRE) the composition is skewed to basic and acidic residues. 7 WD repeats span residues 253-292 (GDDR…NTIA), 296-335 (DHKE…LQTF), 337-376 (GHLD…ELLL), 379-418 (GHSR…SILV), 421-460 (GHIK…SLYI), 463-503 (AHAN…LVKS), and 506-545 (GHES…DEDE).

It is found in the nucleus speckle. Its function is as follows. Participates in pre-mRNA splicing. Part of the U4/U5/U6 tri-snRNP complex, one of the building blocks of the spliceosome. Essential for reproduction. In female gametophyte, is necessary for the egg cell and central cell fate determination and hence reproductive success. Involved in a mechanism that prevents accessory cells from adopting gametic cell fate. Modulates egg cell signaling center that regulates the development of all female gametophytic cells. This chain is U4/U6 small nuclear ribonucleoprotein PRP4-like protein, found in Arabidopsis thaliana (Mouse-ear cress).